Consider the following 280-residue polypeptide: Killer cell lectin-like receptor 7 (280 aa).

At 1 to 44 the chain is on the cytoplasmic side; that stretch reads MSEQEVTYSTVRFHESSRLQKLVRTEEPQRPREACYREYSVPWK. Residues 45–66 traverse the membrane as a helical; Signal-anchor for type II membrane protein segment; sequence LIVIACGILCFLLLVTVALLAI. Residues 67–280 are Extracellular-facing; that stretch reads TIFQHSQQKH…CGKRLDKFPH (214 aa). N104 carries N-linked (GlcNAc...) asparagine glycosylation. In terms of domain architecture, C-type lectin spans 156-275; the sequence is GFEKYWFCYG…SYICICGKRL (120 aa). Cystine bridges form between C163–C168, C181–C269, C185–C271, and C250–C263. An N-linked (GlcNAc...) asparagine glycan is attached at N239.

As to quaternary structure, homodimer; disulfide-linked.

It localises to the membrane. Receptor on natural killer (NK) cells for class I MHC. This Mus musculus (Mouse) protein is Killer cell lectin-like receptor 7 (Klra7).